Reading from the N-terminus, the 120-residue chain is Aspartate 1-decarboxylase (120 aa).

Ser-24 acts as the Schiff-base intermediate with substrate; via pyruvic acid in catalysis. Ser-24 carries the pyruvic acid (Ser) modification. Thr-56 is a substrate binding site. Tyr-57 serves as the catalytic Proton donor. Residue 70–72 coordinates substrate; that stretch reads GAA.

Belongs to the PanD family. As to quaternary structure, heterooctamer of four alpha and four beta subunits. The cofactor is pyruvate. In terms of processing, is synthesized initially as an inactive proenzyme, which is activated by self-cleavage at a specific serine bond to produce a beta-subunit with a hydroxyl group at its C-terminus and an alpha-subunit with a pyruvoyl group at its N-terminus.

It localises to the cytoplasm. The enzyme catalyses L-aspartate + H(+) = beta-alanine + CO2. Its pathway is cofactor biosynthesis; (R)-pantothenate biosynthesis; beta-alanine from L-aspartate: step 1/1. Functionally, catalyzes the pyruvoyl-dependent decarboxylation of aspartate to produce beta-alanine. The sequence is that of Aspartate 1-decarboxylase from Pyrobaculum islandicum (strain DSM 4184 / JCM 9189 / GEO3).